The following is a 173-amino-acid chain: Superoxide dismutase [Cu-Zn] (173 aa).

The signal sequence occupies residues 1 to 19; that stretch reads MKRFSLAILALVVATGAQA. Positions 67, 69, and 92 each coordinate Cu cation. The disordered stretch occupies residues 72-113; sequence GSCQPATKDGKASAAESAGGHLDPQNTGKHEGPEGAGHLGDL. A disulfide bridge links cysteine 74 with cysteine 169. Zn(2+) contacts are provided by histidine 92, histidine 101, histidine 109, and aspartate 112. Cu cation is bound at residue histidine 147.

It belongs to the Cu-Zn superoxide dismutase family. In terms of assembly, monomer. Cu cation serves as cofactor. It depends on Zn(2+) as a cofactor.

The protein localises to the periplasm. The enzyme catalyses 2 superoxide + 2 H(+) = H2O2 + O2. Its function is as follows. Destroys radicals which are normally produced within the cells and which are toxic to biological systems. The chain is Superoxide dismutase [Cu-Zn] (sodC) from Escherichia coli O157:H7.